The sequence spans 114 residues: FK506-binding protein 1 (114 aa).

At serine 2 the chain carries N-acetylserine. Residues 26–114 (GDLVTIHYTG…VFDVELLKVN (89 aa)) form the PPIase FKBP-type domain. Serine 51 is modified (phosphoserine).

It belongs to the FKBP-type PPIase family. FKBP1 subfamily. Interacts with HOM3; the interaction is direct, plays a role in feedback inhibition of aspartokinase by threonine, and is inhibited by tacrolimus and sirolimus. Interacts with HMO1. Interacts with FAP1.

The protein resides in the cytoplasm. The protein localises to the mitochondrion. The enzyme catalyses [protein]-peptidylproline (omega=180) = [protein]-peptidylproline (omega=0). Its function is as follows. PPIases accelerate the folding of proteins. It catalyzes the cis-trans isomerization of proline imidic peptide bonds in oligopeptides. Plays a role in feedback inhibition of the pathway synthesizing the aspartate family of amino acids by binding to aspartokinase. This chain is FK506-binding protein 1 (FPR1), found in Saccharomyces cerevisiae (strain ATCC 204508 / S288c) (Baker's yeast).